Reading from the N-terminus, the 877-residue chain is Leucine--tRNA ligase (877 aa).

The 'HIGH' region signature appears at 43-53 (PYPSGRIHMGH). The 'KMSKS' region signature appears at 628–632 (KMSKS). Lysine 631 is an ATP binding site.

The protein belongs to the class-I aminoacyl-tRNA synthetase family.

The protein localises to the cytoplasm. It catalyses the reaction tRNA(Leu) + L-leucine + ATP = L-leucyl-tRNA(Leu) + AMP + diphosphate. This chain is Leucine--tRNA ligase, found in Brucella abortus (strain S19).